Here is a 146-residue protein sequence, read N- to C-terminus: Keratin-associated protein 4-1 (146 aa).

Tandem repeats lie at residues 5 to 9 (CCGSV), 24 to 28 (CCRPS), 29 to 33 (CCQTT), 34 to 38 (CCCPS), 44 to 48 (CCRPS), 54 to 58 (CCQTT), 59 to 63 (CCRPS), 64 to 68 (CCHPV), 69 to 73 (CCQTT), 83 to 87 (CCRPL), 88 to 92 (CCQTT), 102 to 106 (CCRPL), 107 to 111 (CCQTT), 121 to 125 (CCRPL), 126 to 130 (CCQTT), 131 to 135 (CCRAT), 136 to 140 (CCRPS), and 141 to 145 (CCGSS). An 18 X 5 AA repeats of C-C-[GRQC]-[SPT]-[VSTL] region spans residues 5 to 145 (CCGSVCSDQG…CCRPSCCGSS (141 aa)).

It belongs to the KRTAP type 4 family. As to quaternary structure, interacts with hair keratins. As to expression, expressed in the hair follicles.

Its function is as follows. In the hair cortex, hair keratin intermediate filaments are embedded in an interfilamentous matrix, consisting of hair keratin-associated proteins (KRTAP), which are essential for the formation of a rigid and resistant hair shaft through their extensive disulfide bond cross-linking with abundant cysteine residues of hair keratins. The matrix proteins include the high-sulfur and high-glycine-tyrosine keratins. The sequence is that of Keratin-associated protein 4-1 (KRTAP4-1) from Homo sapiens (Human).